We begin with the raw amino-acid sequence, 268 residues long: Kynurenine formamidase (268 aa).

The HGGXW motif lies at 33–37 (HGGGW). Ser107 (nucleophile) is an active-site residue. Catalysis depends on residues Asp219 and His251.

The protein belongs to the kynurenine formamidase family. Homodimer.

It carries out the reaction N-formyl-L-kynurenine + H2O = L-kynurenine + formate + H(+). Its pathway is amino-acid degradation; L-tryptophan degradation via kynurenine pathway; L-kynurenine from L-tryptophan: step 2/2. Functionally, catalyzes the hydrolysis of N-formyl-L-kynurenine to L-kynurenine, the second step in the kynurenine pathway of tryptophan degradation. Kynurenine may be further oxidized to nicotinic acid, NAD(H) and NADP(H). Required for elimination of toxic metabolites. This chain is Kynurenine formamidase, found in Scheffersomyces stipitis (strain ATCC 58785 / CBS 6054 / NBRC 10063 / NRRL Y-11545) (Yeast).